A 627-amino-acid chain; its full sequence is 5-aminolevulinate synthase, non-specific, mitochondrial (627 aa).

A mitochondrion-targeting transit peptide spans 1–58 (MDVIVRRCPFLARVPQAFFQQSKKSLAVYAQRCPFMMELASKPMAPSLARALCSSSSS). Substrate contacts are provided by arginine 204, serine 321, and lysine 340. Pyridoxal 5'-phosphate contacts are provided by serine 373, histidine 401, and threonine 429. Lysine 432 is an active-site residue. The residue at position 432 (lysine 432) is an N6-(pyridoxal phosphate)lysine. Pyridoxal 5'-phosphate is bound by residues threonine 461 and threonine 462. Residue threonine 549 participates in substrate binding.

It belongs to the class-II pyridoxal-phosphate-dependent aminotransferase family. In terms of assembly, homodimer. Requires pyridoxal 5'-phosphate as cofactor.

Its subcellular location is the mitochondrion inner membrane. The catalysed reaction is succinyl-CoA + glycine + H(+) = 5-aminolevulinate + CO2 + CoA. It functions in the pathway porphyrin-containing compound metabolism; protoporphyrin-IX biosynthesis; 5-aminolevulinate from glycine: step 1/1. In terms of biological role, catalyzes the pyridoxal 5'-phosphate (PLP)-dependent condensation of succinyl-CoA and glycine to form aminolevulinic acid (ALA), with CoA and CO2 as by-products. This chain is 5-aminolevulinate synthase, non-specific, mitochondrial (alas1), found in Opsanus tau (Oyster toadfish).